Consider the following 562-residue polypeptide: Tubby-related protein 2 (562 aa).

Residues 1-81 (MDREGPRGPR…RRGEERFQSD (81 aa)) form a disordered region. A compositionally biased stretch (basic and acidic residues) spans 35–46 (QKLEQQRQLFEK). Residues Ser-152, Ser-153, and Ser-155 each carry the phosphoserine modification. A disordered region spans residues 179–294 (LRRGWLASPG…SNHNAWNMTC (116 aa)). Phosphothreonine is present on Thr-211. Ser-213 carries the post-translational modification Phosphoserine. The segment covering 225–240 (DGDHGDLAPCKVEENT) has biased composition (basic and acidic residues). Over residues 285 to 294 (SNHNAWNMTC) the composition is skewed to polar residues.

The protein belongs to the TUB family. As to expression, expressed in retina and testis.

The protein resides in the cytoplasm. It localises to the secreted. The chain is Tubby-related protein 2 (Tulp2) from Mus musculus (Mouse).